The sequence spans 275 residues: Sororin-B (275 aa).

Residues 1-16 (MSERKKRGSSDADSRR) are compositionally biased toward basic and acidic residues. 2 disordered regions span residues 1-42 (MSER…PAPI) and 63-117 (NTGS…EIDV). 2 stretches are compositionally biased toward polar residues: residues 63 to 76 (NTGS…SNVT) and 93 to 112 (NAFS…QSSA). The KEN box signature appears at 91–93 (KEN). The FGF motif signature appears at 186–188 (FGF). The C-terminal Sororin domain stretch occupies residues 253 to 275 (VDEWAAIMNAEFDEAEKFDLTVE).

It belongs to the sororin family. In terms of assembly, interacts with the APC/C complex. Interacts with the chromatin-bound cohesin complex; the interaction is indirect, occurs after DNA replication and requires acetylation of the cohesin component smc3. Interacts (via the FGF motif) with pds5a and pds5b; the interaction is direct and prevents the interaction of pds5a with wapl. In terms of processing, ubiquitinated by the APC/C complex in G1, leading to its degradation.

Its subcellular location is the nucleus. The protein resides in the chromosome. The protein localises to the cytoplasm. In terms of biological role, regulator of sister chromatid cohesion in mitosis stabilizing cohesin complex association with chromatin. May antagonize the action of wapl which stimulates cohesin dissociation from chromatin. Cohesion ensures that chromosome partitioning is accurate in both meiotic and mitotic cells and plays an important role in DNA repair. Required for efficient DNA double-stranded break repair. This Xenopus laevis (African clawed frog) protein is Sororin-B (cdca5-b).